A 447-amino-acid polypeptide reads, in one-letter code: Na(+)-translocating NADH-quinone reductase subunit A (447 aa).

Belongs to the NqrA family. As to quaternary structure, composed of six subunits; NqrA, NqrB, NqrC, NqrD, NqrE and NqrF.

The enzyme catalyses a ubiquinone + n Na(+)(in) + NADH + H(+) = a ubiquinol + n Na(+)(out) + NAD(+). Its function is as follows. NQR complex catalyzes the reduction of ubiquinone-1 to ubiquinol by two successive reactions, coupled with the transport of Na(+) ions from the cytoplasm to the periplasm. NqrA to NqrE are probably involved in the second step, the conversion of ubisemiquinone to ubiquinol. The polypeptide is Na(+)-translocating NADH-quinone reductase subunit A (Haemophilus influenzae (strain PittEE)).